A 441-amino-acid chain; its full sequence is 3-phosphoshikimate 1-carboxyvinyltransferase (441 aa).

3 residues coordinate 3-phosphoshikimate: Lys22, Ser23, and Arg27. Lys22 serves as a coordination point for phosphoenolpyruvate. 2 residues coordinate phosphoenolpyruvate: Gly95 and Arg123. Residues Ser168, Gln170, Asp321, and Lys348 each contribute to the 3-phosphoshikimate site. Gln170 lines the phosphoenolpyruvate pocket. Residue Asp321 is the Proton acceptor of the active site. Residues Arg352 and Arg400 each contribute to the phosphoenolpyruvate site.

Belongs to the EPSP synthase family. Monomer.

It is found in the cytoplasm. It carries out the reaction 3-phosphoshikimate + phosphoenolpyruvate = 5-O-(1-carboxyvinyl)-3-phosphoshikimate + phosphate. It functions in the pathway metabolic intermediate biosynthesis; chorismate biosynthesis; chorismate from D-erythrose 4-phosphate and phosphoenolpyruvate: step 6/7. Its function is as follows. Catalyzes the transfer of the enolpyruvyl moiety of phosphoenolpyruvate (PEP) to the 5-hydroxyl of shikimate-3-phosphate (S3P) to produce enolpyruvyl shikimate-3-phosphate and inorganic phosphate. This is 3-phosphoshikimate 1-carboxyvinyltransferase from Novosphingobium aromaticivorans (strain ATCC 700278 / DSM 12444 / CCUG 56034 / CIP 105152 / NBRC 16084 / F199).